The sequence spans 523 residues: UDP-glucuronosyltransferase 2B16 (523 aa).

A signal peptide spans 1-16 (LLLLLQLSCCFSSGSC). The residue at position 129 (Lys-129) is an N6-succinyllysine. N-linked (GlcNAc...) asparagine glycosylation is present at Asn-309. A helical transmembrane segment spans residues 487–503 (VIGFLLACLTITTYLVI).

The protein belongs to the UDP-glycosyltransferase family.

The protein resides in the microsome membrane. Its subcellular location is the endoplasmic reticulum membrane. The enzyme catalyses glucuronate acceptor + UDP-alpha-D-glucuronate = acceptor beta-D-glucuronoside + UDP + H(+). UDPGT is of major importance in the conjugation and subsequent elimination of potentially toxic xenobiotics and endogenous compounds. Acts on small phenolic agents such as 2-beta-naphthol and 4-methylumbelliferone as well as bulky phenolic compounds like 2-hydroxy- and 4-hydroxybiphenyl. In contrast to 2B13 it is active toward 4-hydroxyesterone. The sequence is that of UDP-glucuronosyltransferase 2B16 (UGT2B16) from Oryctolagus cuniculus (Rabbit).